The following is a 350-amino-acid chain: Glycerol-1-phosphate dehydrogenase [NAD(P)+] (350 aa).

Residues 94 to 98 (GKPID) and 116 to 119 (TVAS) contribute to the NAD(+) site. Asp121 lines the substrate pocket. Ser125 is an NAD(+) binding site. Asp168 contributes to the substrate binding site. Asp168 and His248 together coordinate Zn(2+). His252 contacts substrate. Residue His264 coordinates Zn(2+).

The protein belongs to the glycerol-1-phosphate dehydrogenase family. It depends on Zn(2+) as a cofactor.

It is found in the cytoplasm. The enzyme catalyses sn-glycerol 1-phosphate + NAD(+) = dihydroxyacetone phosphate + NADH + H(+). The catalysed reaction is sn-glycerol 1-phosphate + NADP(+) = dihydroxyacetone phosphate + NADPH + H(+). The protein operates within membrane lipid metabolism; glycerophospholipid metabolism. Catalyzes the NAD(P)H-dependent reduction of dihydroxyacetonephosphate (DHAP or glycerone phosphate) to glycerol 1-phosphate (G1P). The G1P thus generated is used as the glycerophosphate backbone of phospholipids in the cellular membranes of Archaea. This chain is Glycerol-1-phosphate dehydrogenase [NAD(P)+], found in Halorubrum lacusprofundi (strain ATCC 49239 / DSM 5036 / JCM 8891 / ACAM 34).